Reading from the N-terminus, the 362-residue chain is Putative G-protein coupled receptor B0244.5 (362 aa).

Topologically, residues 1-47 (MQNIFENCSYHSKYEPYFLNCTNTTNQCVLIQDVGIIQAIDFWANLC) are extracellular. N-linked (GlcNAc...) asparagine glycosylation is found at N7, N20, and N23. A helical membrane pass occupies residues 48-68 (IPFTLFVIAFILNGYYLSILI). Residues 69–81 (PEFRKMNDTTKKQ) lie on the Cytoplasmic side of the membrane. Residues 82–102 (YIFVVSRGISSLSASSIMMVL) form a helical membrane-spanning segment. The Extracellular segment spans residues 103–125 (RLLKMLSTSFTVYFLFFLIDDLS). A helical membrane pass occupies residues 126–145 (FYSLLGSYVGSTLLLYLATV). Residues 146-161 (RPIFYSIQISVRIVYK) are Cytoplasmic-facing. Residues 162–182 (FALVNVLLAVVLAVTTAIFQA) form a helical membrane-spanning segment. At 183 to 204 (AEVSDGFFHCDVQHCQPIINIA) the chain is on the extracellular side. The helical transmembrane segment at 205 to 225 (MFVIIATSFLIPIITLTFVLV) threads the bilayer. At 226–255 (TLCFQKSRTQSIGNFTVDNSVYKSARTRLA) the chain is on the cytoplasmic side. The chain crosses the membrane as a helical span at residues 256-276 (WTLFTFTLISLTEMIPSSFLV). At 277–295 (NLRVEDTITICVNFYQADH) the chain is on the extracellular side. Residues 296 to 316 (LFIPAIMNSFQTLAWGIALIV) traverse the membrane as a helical segment. Topologically, residues 317 to 362 (DPLCALLFDPRIRKVWVEHVSRLSIIIGRSFEACCHSNLNKEIQDK) are cytoplasmic.

Belongs to the G-protein coupled receptor 1 family. B0244 subfamily.

The protein localises to the cell membrane. This chain is Putative G-protein coupled receptor B0244.5, found in Caenorhabditis elegans.